The following is a 117-amino-acid chain: Immunoglobulin heavy variable 1-46 (117 aa).

An N-terminal signal peptide occupies residues 1–19 (MDWTWRVFCLLAVAPGAHS). Residues 20-44 (QVQLVQSGAEVKKPGASVKVSCKAS) form a framework-1 region. Positions 20–117 (QVQLVQSGAE…EDTAVYYCAR (98 aa)) constitute an Ig-like domain. A disulfide bridge links C41 with C115. The segment at 45–52 (GYTFTSYY) is complementarity-determining-1. The framework-2 stretch occupies residues 53–69 (MHWVRQAPGQGLEWMGI). The tract at residues 70-77 (INPSGGST) is complementarity-determining-2. Residues 78 to 115 (SYAQKFQGRVTMTRDTSTSTVYMELSSLRSEDTAVYYC) form a framework-3 region. Residues 116–117 (AR) are complementarity-determining-3.

In terms of assembly, immunoglobulins are composed of two identical heavy chains and two identical light chains; disulfide-linked.

It is found in the secreted. It localises to the cell membrane. V region of the variable domain of immunoglobulin heavy chains that participates in the antigen recognition. Immunoglobulins, also known as antibodies, are membrane-bound or secreted glycoproteins produced by B lymphocytes. In the recognition phase of humoral immunity, the membrane-bound immunoglobulins serve as receptors which, upon binding of a specific antigen, trigger the clonal expansion and differentiation of B lymphocytes into immunoglobulins-secreting plasma cells. Secreted immunoglobulins mediate the effector phase of humoral immunity, which results in the elimination of bound antigens. The antigen binding site is formed by the variable domain of one heavy chain, together with that of its associated light chain. Thus, each immunoglobulin has two antigen binding sites with remarkable affinity for a particular antigen. The variable domains are assembled by a process called V-(D)-J rearrangement and can then be subjected to somatic hypermutations which, after exposure to antigen and selection, allow affinity maturation for a particular antigen. This is Immunoglobulin heavy variable 1-46 from Homo sapiens (Human).